A 260-amino-acid chain; its full sequence is Global transcriptional regulator CodY (260 aa).

The interval 1–159 (MPNLLEKTRK…SSTVVGIQLL (159 aa)) is GAF domain. Positions 207-226 (ASVIADRIGITRSVIVNALR) form a DNA-binding region, H-T-H motif.

It belongs to the CodY family.

The protein localises to the cytoplasm. Functionally, DNA-binding global transcriptional regulator which is involved in the adaptive response to starvation and acts by directly or indirectly controlling the expression of numerous genes in response to nutrient availability. During rapid exponential growth, CodY is highly active and represses genes whose products allow adaptation to nutrient depletion. This is Global transcriptional regulator CodY from Streptococcus equi subsp. equi (strain 4047).